We begin with the raw amino-acid sequence, 445 residues long: tRNA-2-methylthio-N(6)-dimethylallyladenosine synthase (445 aa).

The region spanning 7 to 121 is the MTTase N-terminal domain; that stretch reads KTFYIETFGC…LPEMLVQLEA (115 aa). [4Fe-4S] cluster is bound by residues Cys16, Cys52, Cys84, Cys158, Cys162, and Cys165. Positions 144–374 constitute a Radical SAM core domain; it reads RDNPHRAYLT…QEKQRAIQIR (231 aa). The TRAM domain maps to 377–443; it reads AEMIGSIQEV…PNSLVGESAA (67 aa).

It belongs to the methylthiotransferase family. MiaB subfamily. As to quaternary structure, monomer. [4Fe-4S] cluster serves as cofactor.

The protein localises to the cytoplasm. It carries out the reaction N(6)-dimethylallyladenosine(37) in tRNA + (sulfur carrier)-SH + AH2 + 2 S-adenosyl-L-methionine = 2-methylsulfanyl-N(6)-dimethylallyladenosine(37) in tRNA + (sulfur carrier)-H + 5'-deoxyadenosine + L-methionine + A + S-adenosyl-L-homocysteine + 2 H(+). Functionally, catalyzes the methylthiolation of N6-(dimethylallyl)adenosine (i(6)A), leading to the formation of 2-methylthio-N6-(dimethylallyl)adenosine (ms(2)i(6)A) at position 37 in tRNAs that read codons beginning with uridine. This is tRNA-2-methylthio-N(6)-dimethylallyladenosine synthase from Solibacter usitatus (strain Ellin6076).